Here is a 525-residue protein sequence, read N- to C-terminus: GMP synthase [glutamine-hydrolyzing] (525 aa).

The 199-residue stretch at 9 to 207 (RILILDFGSQ…VQDICGCEAL (199 aa)) folds into the Glutamine amidotransferase type-1 domain. Cysteine 86 serves as the catalytic Nucleophile. Active-site residues include histidine 181 and glutamate 183. The region spanning 208–400 (WTASNIVEDA…LGLPYDMVYR (193 aa)) is the GMPS ATP-PPase domain. 235 to 241 (SGGVDSS) provides a ligand contact to ATP.

In terms of assembly, homodimer.

It catalyses the reaction XMP + L-glutamine + ATP + H2O = GMP + L-glutamate + AMP + diphosphate + 2 H(+). Its pathway is purine metabolism; GMP biosynthesis; GMP from XMP (L-Gln route): step 1/1. Its function is as follows. Catalyzes the synthesis of GMP from XMP. In Pseudomonas putida (strain GB-1), this protein is GMP synthase [glutamine-hydrolyzing].